Here is a 160-residue protein sequence, read N- to C-terminus: MSILKKPDLTDPKLRAKLAKGMGHNYYGEPAWPNDLLYVFPVVIIGTFACSIGLAILEPSSIGEKSNPFATPLEILPEWYFFPTFNLLRVIPNKLLGVLSMAAVPAGLLTVPFIENVNKFQNPFRRPIATTVFLIGTVVSIWLGIGATMPINNAITLGLF.

The next 3 membrane-spanning stretches (helical) occupy residues 36-56, 95-115, and 131-151; these read LLYV…GLAI, LLGV…PFIE, and TVFL…TMPI.

It belongs to the cytochrome b family. PetD subfamily. In terms of assembly, the 4 large subunits of the cytochrome b6-f complex are cytochrome b6, subunit IV (17 kDa polypeptide, petD), cytochrome f and the Rieske protein, while the 4 small subunits are petG, petL, petM and petN. The complex functions as a dimer.

The protein localises to the plastid. The protein resides in the chloroplast thylakoid membrane. Its function is as follows. Component of the cytochrome b6-f complex, which mediates electron transfer between photosystem II (PSII) and photosystem I (PSI), cyclic electron flow around PSI, and state transitions. In Pyropia yezoensis (Susabi-nori), this protein is Cytochrome b6-f complex subunit 4.